The sequence spans 344 residues: S-adenosylmethionine:tRNA ribosyltransferase-isomerase (344 aa).

It belongs to the QueA family. As to quaternary structure, monomer.

Its subcellular location is the cytoplasm. It catalyses the reaction 7-aminomethyl-7-carbaguanosine(34) in tRNA + S-adenosyl-L-methionine = epoxyqueuosine(34) in tRNA + adenine + L-methionine + 2 H(+). It participates in tRNA modification; tRNA-queuosine biosynthesis. Functionally, transfers and isomerizes the ribose moiety from AdoMet to the 7-aminomethyl group of 7-deazaguanine (preQ1-tRNA) to give epoxyqueuosine (oQ-tRNA). In Nitrosococcus oceani (strain ATCC 19707 / BCRC 17464 / JCM 30415 / NCIMB 11848 / C-107), this protein is S-adenosylmethionine:tRNA ribosyltransferase-isomerase.